Consider the following 175-residue polypeptide: Bcl-2-related protein A1 (175 aa).

Residues 77–97 (KEFEDGIINWGRIVTIFAFEG) carry the BH1 motif. The short motif at 132 to 147 (EWIRQNGGWENGFVKK) is the BH2 element.

The protein belongs to the Bcl-2 family. In terms of assembly, interacts directly with BAK1, BID, BMF and BBC3. Interacts directly with BCL2L11/BIM. Interacts with BAX isoform Sigma. Interacts directly with PMAIP1. Interacts with RTL10/BOP. Interacts with ING4. Interacts with UBQLN4. As to expression, seems to be restricted to the hematopoietic compartment. Expressed in peripheral blood, spleen, and bone marrow, at moderate levels in lung, small intestine and testis, at a minimal levels in other tissues. Also found in vascular smooth muscle cells and hematopoietic malignancies.

Its subcellular location is the cytoplasm. Functionally, retards apoptosis induced by IL-3 deprivation. May function in the response of hemopoietic cells to external signals and in maintaining endothelial survival during infection. Can inhibit apoptosis induced by serum starvation in the mammary epithelial cell line HC11. This chain is Bcl-2-related protein A1 (BCL2A1), found in Homo sapiens (Human).